Reading from the N-terminus, the 542-residue chain is MAKQLLFDDTARKALERGVDALANAVKVTLGPKGRNVVIDKKWGAPTITNDGVTIAREVELDDPYENLGAQLAKEVATKTNDVAGDGTTTATVLAQALVHEGLRNVAAGAAPSGLKRGIDAAVDAVSDQLLSMARDVDGKGDIAHVATISAQDPAVGELLADAFDKVGKDGVITVEESSTTALELDFTEGMQFDKGYISPYFVTDAERQEAVLEDAYVLVHQGKISTVQDLLPLLEKVLKAAKPLLIIAEDVDGEALSTLVVNKIRGTFNAVAVKAPGFGDRRKAILQDIATLTGAQVVAEEVGLKLDQIDLDALGTARRITVTKDDTTIVDGAGSSEDIAGRVAQIKAEVERTDSDWDREKLQERLAKLSGGVVVIKVGAHTEVELKEKKHRIEDAVSATRAAIEEGIVAGGGSALVHAVSVLEDNLGRTGDEATGVALVRKAASEPLRWIAENAGLEGYVVVEKVRSLEVGSGLNAATGEYVDLLAAGVLDPVKVTRSALRNAASIASMVLTTDTLVVDKKEEDLAVNGGGHGHGHGHGH.

ATP is bound by residues 29–32 (TLGP), 86–90 (DGTTT), glycine 413, 477–479 (NAA), and aspartate 493.

Belongs to the chaperonin (HSP60) family. In terms of assembly, forms a cylinder of 14 subunits composed of two heptameric rings stacked back-to-back. Interacts with the co-chaperonin GroES.

The protein resides in the cytoplasm. It catalyses the reaction ATP + H2O + a folded polypeptide = ADP + phosphate + an unfolded polypeptide.. Its function is as follows. Together with its co-chaperonin GroES, plays an essential role in assisting protein folding. The GroEL-GroES system forms a nano-cage that allows encapsulation of the non-native substrate proteins and provides a physical environment optimized to promote and accelerate protein folding. This is Chaperonin GroEL 1 from Kineococcus radiotolerans (strain ATCC BAA-149 / DSM 14245 / SRS30216).